Consider the following 475-residue polypeptide: Coagulation factor X (475 aa).

Positions 1 to 20 (MAGRLLLLLLCAALPDELRA) are cleaved as a signal peptide. A propeptide spanning residues 21–40 (EGGVFIKKESADKFLERTKR) is cleaved from the precursor. One can recognise a Gla domain in the interval 41–85 (ANSFLEEMKQGNIERECNEERCSKEEAREAFEDNEKTEEFWNIYV). A 4-carboxyglutamate mark is found at E46, E47, E54, E56, E59, E60, E65, E66, E69, E72, and E79. A disulfide bridge connects residues C57 and C62. Positions 86 to 122 (DGDQCSSNPCHYGGQCKDGLGSYTCSCLDGYQGKNCE) constitute an EGF-like 1; calcium-binding domain. Disulfide bonds link C90-C101, C95-C110, C112-C121, C129-C140, C136-C152, C154-C167, C175-C348, C247-C252, C267-C283, C396-C410, and C421-C449. D103 carries the post-translational modification (3R)-3-hydroxyaspartate. Positions 125–168 (IPKYCKINNGDCEQFCSIKKSVQKDVVCSCTSGYELAEDGKQCV) constitute an EGF-like 2 domain. Positions 186–240 (SVILPTNSNTNATSDQDVPSTNGSILEEVFTTTTESPTPPPRNGSSITDPNVDTR) are cleaved as a propeptide — activation peptide. 3 N-linked (GlcNAc...) asparagine glycosylation sites follow: N196, N207, and N228. The interval 216–237 (TTTTESPTPPPRNGSSITDPNV) is disordered. Positions 241-473 (IVGGDECRPG…FLRWVRTVMR (233 aa)) constitute a Peptidase S1 domain. H282 functions as the Charge relay system in the catalytic mechanism. N285 carries N-linked (GlcNAc...) asparagine glycosylation. Catalysis depends on D328, which acts as the Charge relay system. Residue S425 is the Charge relay system of the active site.

Belongs to the peptidase S1 family. In terms of assembly, the two chains are formed from a single-chain precursor by the excision of two Arg residues and are held together by 1 or more disulfide bonds. Post-translationally, the vitamin K-dependent, enzymatic carboxylation of some glutamate residues allows the modified protein to bind calcium. The activation peptide is cleaved by factor IXa (in the intrinsic pathway), or by factor VIIa (in the extrinsic pathway). In terms of processing, the iron and 2-oxoglutarate dependent 3-hydroxylation of aspartate and asparagine is (R) stereospecific within EGF domains. As to expression, liver and chorioallantoic membrane.

The protein localises to the secreted. It carries out the reaction Selective cleavage of Arg-|-Thr and then Arg-|-Ile bonds in prothrombin to form thrombin.. Factor Xa is a vitamin K-dependent glycoprotein that converts prothrombin to thrombin in the presence of factor Va, calcium and phospholipid during blood clotting. VAP cleaves the fusion proteins of Sendai virus, NDV, and influenza virus a at a specific single arginine-containing site, and plays a key role in the viral spreading in the allantoic sac. This Gallus gallus (Chicken) protein is Coagulation factor X (F10).